A 473-amino-acid chain; its full sequence is Serine carboxypeptidase-like 42 (473 aa).

Positions 1 to 26 (MASVSWRAVAVAMVVVLLSLQWFAKG) are cleaved as a signal peptide. Disulfide bonds link Cys87–Cys346, Cys247–Cys264, and Cys289–Cys314. An N-linked (GlcNAc...) asparagine glycan is attached at Asn138. Ser179 is a catalytic residue. Residue Asn259 is glycosylated (N-linked (GlcNAc...) asparagine). Asn335 and Asn351 each carry an N-linked (GlcNAc...) asparagine glycan. Residues Asp383 and His440 contribute to the active site. A glycan (N-linked (GlcNAc...) asparagine) is linked at Asn465.

It belongs to the peptidase S10 family. As to expression, expression not detected.

It is found in the secreted. Functionally, probable carboxypeptidase. This Arabidopsis thaliana (Mouse-ear cress) protein is Serine carboxypeptidase-like 42 (SCPL42).